A 1649-amino-acid chain; its full sequence is Formin-like protein 20 (1649 aa).

The Phosphatase tensin-type domain maps to 1 to 194; the sequence is MALFRRFFYK…QYISRRNLGS (194 aa). The active-site Phosphocysteine intermediate is the C127. Residues 200 to 339 form the C2 tensin-type domain; sequence DTPLLLDCLI…FKAEVLFSGA (140 aa). Disordered regions lie at residues 416-774 and 787-1245; these read DCAS…PWKS and STSQ…QKKS. The span at 421-483 shows a compositional bias: basic and acidic residues; it reads DSNHKHDMHA…RRTVEAKEND (63 aa). Polar residues-rich tracts occupy residues 500–513 and 585–597; these read LESM…SLNK and RINS…TTSL. Over residues 598–616 the composition is skewed to basic and acidic residues; it reads KDGKRATSPDGVIPKDAKT. A compositionally biased stretch (pro residues) spans 648–662; that stretch reads SLPPASPHQAPPPLP. The segment covering 665–678 has biased composition (polar residues); the sequence is TSEAKTVLHSSQAV. Pro residues-rich tracts occupy residues 680 to 691, 701 to 711, 722 to 732, 743 to 752, and 795 to 804; these read SPPPPPPPPPLP, LPPPPPPPPPF, LPPPPPPPLP, and SPTPPPPPPA. Over residues 809 to 820 the composition is skewed to polar residues; that stretch reads GQKSSDLQTSQL. Pro residues-rich tracts occupy residues 821 to 832, 843 to 854, and 865 to 874; these read PSPPPPPPPPPF, LPPPPPPPPPPF, and LPPPPPPPPW. The segment covering 878–890 has biased composition (polar residues); sequence YASTFETHEACST. 3 stretches are compositionally biased toward pro residues: residues 893 to 904, 944 to 960, and 968 to 1213; these read SPPPPPPPPPFS, PSPP…PPPF, and SPPP…PPPM. In terms of domain architecture, FH2 spans 1237 to 1635; that stretch reads FGSAAQKKSS…KALKEAEMEK (399 aa).

It belongs to the formin-like family. Class-II subfamily.

The chain is Formin-like protein 20 (FH20) from Arabidopsis thaliana (Mouse-ear cress).